A 144-amino-acid chain; its full sequence is Large ribosomal subunit protein uL24 (144 aa).

A disordered region spans residues 1-22 (MKFNKMVSSDRGKNRKRHFNAP). The segment covering 13 to 22 (KNRKRHFNAP) has biased composition (basic residues).

The protein belongs to the universal ribosomal protein uL24 family.

This is Large ribosomal subunit protein uL24 (RPL26) from Littorina littorea (Common periwinkle).